The following is a 144-amino-acid chain: Granulocyte-macrophage colony-stimulating factor (144 aa).

A signal peptide spans Met1 to Ser17. Ser22 carries an O-linked (GalNAc...) serine glycan. A glycan (O-linked (GalNAc...) threonine) is linked at Thr27. 2 disulfide bridges follow: Cys71–Cys113 and Cys105–Cys138. Asn86 carries N-linked (GlcNAc...) asparagine glycosylation.

This sequence belongs to the GM-CSF family. Monomer. The signaling GM-CSF receptor complex is a dodecamer of two head-to-head hexamers of two alpha, two beta, and two ligand subunits.

It is found in the secreted. In terms of biological role, cytokine that stimulates the growth and differentiation of hematopoietic precursor cells from various lineages, including granulocytes, macrophages, eosinophils and erythrocytes. This Rattus norvegicus (Rat) protein is Granulocyte-macrophage colony-stimulating factor (Csf2).